Consider the following 350-residue polypeptide: Chlorophyll a/b light-harvesting protein PcbA (350 aa).

6 helical membrane passes run 26–46, 62–82, 87–107, 214–234, 248–268, and 309–329; these read LSAH…ITLF, LILI…GQVV, YFVI…GALY, IAVV…FPWA, LSAS…FSAV, and LCNV…WHAL.

The protein belongs to the PsbB/PsbC family. IsiA/Pcb subfamily. The antenna complex consists of chlorophylls (a and b) and chlorophyll a/b binding proteins. It depends on chlorophyll a as a cofactor. Chlorophyll b serves as cofactor.

The protein resides in the cellular thylakoid membrane. In terms of biological role, the antenna complex functions as a light receptor, it captures and delivers excitation energy to photosystems II and I. The Prochlorales pcb genes are not related to higher plant LHCs. The chain is Chlorophyll a/b light-harvesting protein PcbA (pcbA) from Prochlorothrix hollandica.